We begin with the raw amino-acid sequence, 99 residues long: MRHILIWFVRGYQRFISPLFPPTCRYYPTCSTYMVQALSKHGALKGSLMGLARILRCQPFVRGGIDPVPDHFTLKRNTAAEAAYRQAMQLDEIERHPHK.

This sequence belongs to the UPF0161 family.

The protein resides in the cell membrane. Its function is as follows. Could be involved in insertion of integral membrane proteins into the membrane. In Levilactobacillus brevis (strain ATCC 367 / BCRC 12310 / CIP 105137 / JCM 1170 / LMG 11437 / NCIMB 947 / NCTC 947) (Lactobacillus brevis), this protein is Putative membrane protein insertion efficiency factor.